The primary structure comprises 351 residues: Anthranilate phosphoribosyltransferase (351 aa).

Residues G92, 95–96 (GD), T100, 102–105 (NIST), 120–128 (KHGNRAASS), and S132 contribute to the 5-phospho-alpha-D-ribose 1-diphosphate site. G92 contributes to the anthranilate binding site. A Mg(2+)-binding site is contributed by S104. Residue N123 participates in anthranilate binding. Anthranilate is bound at residue R178. Positions 236 and 237 each coordinate Mg(2+).

It belongs to the anthranilate phosphoribosyltransferase family. In terms of assembly, homodimer. It depends on Mg(2+) as a cofactor.

It carries out the reaction N-(5-phospho-beta-D-ribosyl)anthranilate + diphosphate = 5-phospho-alpha-D-ribose 1-diphosphate + anthranilate. The protein operates within amino-acid biosynthesis; L-tryptophan biosynthesis; L-tryptophan from chorismate: step 2/5. In terms of biological role, catalyzes the transfer of the phosphoribosyl group of 5-phosphorylribose-1-pyrophosphate (PRPP) to anthranilate to yield N-(5'-phosphoribosyl)-anthranilate (PRA). This Deinococcus geothermalis (strain DSM 11300 / CIP 105573 / AG-3a) protein is Anthranilate phosphoribosyltransferase.